The chain runs to 552 residues: Phosphoglucomutase (552 aa).

The active-site Phosphoserine intermediate is serine 143. 4 residues coordinate Mg(2+): serine 143, aspartate 295, aspartate 297, and aspartate 299.

This sequence belongs to the phosphohexose mutase family. It depends on Mg(2+) as a cofactor.

It carries out the reaction alpha-D-glucose 1-phosphate = alpha-D-glucose 6-phosphate. It functions in the pathway glycolipid metabolism; diglucosyl-diacylglycerol biosynthesis. In terms of biological role, catalyzes the interconversion between glucose-6-phosphate and alpha-glucose-1-phosphate. This is the first step in the biosynthesis of diglucosyl-diacylglycerol (Glc2-DAG), i.e. the predominant glycolipid found in the S.aureus membrane, which is also used as a membrane anchor for lipoteichoic acid (LTA). This chain is Phosphoglucomutase (pgcA), found in Staphylococcus aureus (strain MSSA476).